The sequence spans 123 residues: MPTINQLVRKGRQKPVYVNKVPALEACPQKRGVCTRVYTTTPRKPNSALRKVCKVRLTNGFEVISYIGGEGHNLQEHSVVLIRGGRVKDLPGVRYHTVRGSLDTAGVKDRKQARSKYGAKRPK.

Position 89 is a 3-methylthioaspartic acid (D89). Positions 104-123 (TAGVKDRKQARSKYGAKRPK) are disordered. Over residues 113 to 123 (ARSKYGAKRPK) the composition is skewed to basic residues.

Belongs to the universal ribosomal protein uS12 family. As to quaternary structure, part of the 30S ribosomal subunit. Contacts proteins S8 and S17. May interact with IF1 in the 30S initiation complex.

Its function is as follows. With S4 and S5 plays an important role in translational accuracy. Interacts with and stabilizes bases of the 16S rRNA that are involved in tRNA selection in the A site and with the mRNA backbone. Located at the interface of the 30S and 50S subunits, it traverses the body of the 30S subunit contacting proteins on the other side and probably holding the rRNA structure together. The combined cluster of proteins S8, S12 and S17 appears to hold together the shoulder and platform of the 30S subunit. This chain is Small ribosomal subunit protein uS12, found in Neisseria gonorrhoeae (strain ATCC 700825 / FA 1090).